The following is a 98-amino-acid chain: Lipolysis-activating peptide 1-alpha chain (98 aa).

The N-terminal stretch at 1 to 22 (MMKLVLFGIIVILFSMIGSIHG) is a signal peptide. Residues 26 to 89 (PGNYPLNTYG…IWDAVKRHCK (64 aa)) form the LCN-type CS-alpha/beta domain. Cystine bridges form between C40–C63, C49–C68, and C53–C70. At K96 the chain carries Lysine amide.

This sequence belongs to the long (3 C-C) scorpion toxin superfamily. In terms of assembly, monomer (edited version) and heterodimer (non-edited version) of this alpha chain and a beta chain (AC B8XGZ8). As to expression, expressed by the venom gland.

The protein resides in the secreted. In terms of biological role, the heterodimer non-edited LVP1 induces lipolysis in rat adipocytes. Induction of lipolysis by LVP1 appears to be mediated through the beta-2 adrenergic receptor pathway (ADRB2). Functionally, the edited BmKBTx-like, similar to beta-toxins, may modulate voltage-gated sodium channels (Nav) and may block voltage-gated potassium channels (Kv). In Buthus israelis (Israeli scorpion), this protein is Lipolysis-activating peptide 1-alpha chain.